The following is a 511-amino-acid chain: 2-isopropylmalate synthase (511 aa).

A Pyruvate carboxyltransferase domain is found at 6–269 (IIIFDTTLRD…YTDIKCENIF (264 aa)). 4 residues coordinate Mn(2+): Asp15, His203, His205, and Asn239. A regulatory domain region spans residues 394-511 (VIEKLSVISG…SLKVEERKMA (118 aa)).

It belongs to the alpha-IPM synthase/homocitrate synthase family. LeuA type 1 subfamily. As to quaternary structure, homodimer. The cofactor is Mn(2+).

Its subcellular location is the cytoplasm. The catalysed reaction is 3-methyl-2-oxobutanoate + acetyl-CoA + H2O = (2S)-2-isopropylmalate + CoA + H(+). The protein operates within amino-acid biosynthesis; L-leucine biosynthesis; L-leucine from 3-methyl-2-oxobutanoate: step 1/4. Its function is as follows. Catalyzes the condensation of the acetyl group of acetyl-CoA with 3-methyl-2-oxobutanoate (2-ketoisovalerate) to form 3-carboxy-3-hydroxy-4-methylpentanoate (2-isopropylmalate). This Campylobacter jejuni subsp. jejuni serotype O:23/36 (strain 81-176) protein is 2-isopropylmalate synthase.